Consider the following 551-residue polypeptide: Putative ABC transporter ATP-binding protein BA_3364/GBAA_3364/BAS3118 (551 aa).

ABC transporter domains lie at 5–243 (AEIK…FRPF) and 293–525 (LSAE…SINR). Residues 39 to 46 (GGSGSGKT) and 327 to 334 (GKNGTGKS) contribute to the ATP site.

Belongs to the ABC transporter superfamily.

It is found in the cell membrane. Probably part of an ABC transporter complex. Responsible for energy coupling to the transport system. The polypeptide is Putative ABC transporter ATP-binding protein BA_3364/GBAA_3364/BAS3118 (Bacillus anthracis).